Here is a 59-residue protein sequence, read N- to C-terminus: Large ribosomal subunit protein bL32 (59 aa).

The tract at residues 1–22 (MAVQQNKKSPSKRGMHRSHDFL) is disordered.

It belongs to the bacterial ribosomal protein bL32 family.

The protein is Large ribosomal subunit protein bL32 of Thiobacillus denitrificans (strain ATCC 25259 / T1).